Here is a 217-residue protein sequence, read N- to C-terminus: Large ribosomal subunit protein uL1 (217 aa).

The protein belongs to the universal ribosomal protein uL1 family. Part of the 50S ribosomal subunit.

Functionally, binds directly to 23S rRNA. Probably involved in E site tRNA release. Its function is as follows. Protein L1 is also a translational repressor protein, it controls the translation of its operon by binding to its mRNA. The sequence is that of Large ribosomal subunit protein uL1 from Thermoplasma acidophilum (strain ATCC 25905 / DSM 1728 / JCM 9062 / NBRC 15155 / AMRC-C165).